We begin with the raw amino-acid sequence, 316 residues long: Phosphatidylinositol mannoside acyltransferase (316 aa).

Catalysis depends on H137, which acts as the Proton acceptor. The hexadecanoyl-CoA site is built by H137 and R175. Residue E211 is part of the active site. Hexadecanoyl-CoA is bound at residue E240.

Belongs to the LpxL/LpxM/LpxP family.

Its subcellular location is the cell inner membrane. It catalyses the reaction a 2,6-O-bis(alpha-D-mannopyranosyl)-1-phosphatidyl-1D-myo-inositol + an acyl-CoA = a 2-O-(alpha-D-mannosyl)-6-O-(6-O-acyl-alpha-D-mannosyl)-1-phosphatidyl-1D-myo-inositol + CoA. It carries out the reaction a 1,2-diacyl-sn-glycero-3-phospho-[alpha-D-mannopyranosyl-(1&lt;-&gt;6)-D-myo-inositol] + an acyl-CoA = a 1,2-diacyl-sn-glycero-3-phospho-[alpha-D-6-acyl-mannopyranosyl-(1&lt;-&gt;6)-D-myo-inositol] + CoA. It functions in the pathway phospholipid metabolism; phosphatidylinositol metabolism. Its function is as follows. Catalyzes the transfer of a palmitoyl moiety from palmitoyl-CoA to the 6-position of the mannose ring linked to the 2-position of myo-inositol in phosphatidyl-myo-inositol monomannoside (PIM1) or dimannoside (PIM2). This is Phosphatidylinositol mannoside acyltransferase from Mycobacterium tuberculosis (strain CDC 1551 / Oshkosh).